Here is a 137-residue protein sequence, read N- to C-terminus: Large ribosomal subunit protein uL16 (137 aa).

This sequence belongs to the universal ribosomal protein uL16 family. Part of the 50S ribosomal subunit.

Functionally, binds 23S rRNA and is also seen to make contacts with the A and possibly P site tRNAs. This is Large ribosomal subunit protein uL16 from Wolbachia pipientis wMel.